The chain runs to 334 residues: HTH-type transcriptional repressor PurR (334 aa).

The 55-residue stretch at 2 to 56 folds into the HTH lacI-type domain; the sequence is ATIKDVARLAGVSTTTVSHVINKTRFVAETTQEKVMKAVDELNYAPSAVARSLKC. A DNA-binding region (H-T-H motif) is located at residues 4–23; it reads IKDVARLAGVSTTTVSHVIN. The DNA-binding element occupies 48 to 56; sequence SAVARSLKC. Phe-73, Lys-189, Phe-220, and Asp-274 together coordinate hypoxanthine.

In terms of assembly, homodimer.

It functions in the pathway purine metabolism; purine nucleotide biosynthesis [regulation]. In terms of biological role, is the main repressor of the genes involved in the de novo synthesis of purine nucleotides, regulating purB, purC, purEK, purF, purHD, purL, purMN and guaBA expression. PurR is allosterically activated to bind its cognate DNA by binding the purine corepressors, hypoxanthine or guanine, thereby effecting transcription repression. This is HTH-type transcriptional repressor PurR from Vibrio campbellii (strain ATCC BAA-1116).